A 285-amino-acid chain; its full sequence is Seed agglutinin 2 (285 aa).

A signal peptide spans 1–31 (MASYKFKTQNSFLLLLSISFFFLLLLNKVNS). N-linked (GlcNAc...) asparagine glycosylation is present at asparagine 147. Residues glutamate 156 and aspartate 158 each contribute to the Mn(2+) site. 3 residues coordinate Ca(2+): aspartate 158, asparagine 162, and aspartate 166. 2 residues coordinate Mn(2+): aspartate 166 and histidine 171.

The protein belongs to the leguminous lectin family. As to quaternary structure, homotetramer. In terms of processing, mostly found in non-glycosylated form. As to expression, expressed in seed.

Functionally, seed lectin. This is Seed agglutinin 2 from Robinia pseudoacacia (Black locust).